Here is a 266-residue protein sequence, read N- to C-terminus: Putative hydro-lyase VF_1377 (266 aa).

The protein belongs to the D-glutamate cyclase family.

This Aliivibrio fischeri (strain ATCC 700601 / ES114) (Vibrio fischeri) protein is Putative hydro-lyase VF_1377.